The following is a 304-amino-acid chain: Homoserine kinase (304 aa).

ATP is bound at residue 90–100 (PLARGLGSSAS).

The protein belongs to the GHMP kinase family. Homoserine kinase subfamily.

The protein resides in the cytoplasm. The catalysed reaction is L-homoserine + ATP = O-phospho-L-homoserine + ADP + H(+). Its pathway is amino-acid biosynthesis; L-threonine biosynthesis; L-threonine from L-aspartate: step 4/5. In terms of biological role, catalyzes the ATP-dependent phosphorylation of L-homoserine to L-homoserine phosphate. The chain is Homoserine kinase from Staphylococcus aureus (strain NCTC 8325 / PS 47).